Reading from the N-terminus, the 1476-residue chain is Membrane-associated guanylate kinase, WW and PDZ domain-containing protein 3 (1476 aa).

The 91-residue stretch at cysteine 18–glycine 108 folds into the PDZ 1 domain. The interval cysteine 18 to glycine 108 is interaction with ADRB1 and TGFA. The region spanning arginine 116 to methionine 290 is the Guanylate kinase-like domain. Phenylalanine 123–histidine 130 serves as a coordination point for ATP. Residues threonine 184–serine 266 form a disordered region. Positions proline 193 to proline 204 are enriched in pro residues. Serine 236 is subject to Phosphoserine. Residues leucine 238–lysine 247 show a composition bias toward acidic residues. 2 consecutive WW domains span residues glutamate 296–leucine 329 and glycine 342–glutamate 375. Residues arginine 413–arginine 495 form the PDZ 2 domain. Positions arginine 413 to arginine 495 are interaction with PTEN. The tract at residues leucine 551–serine 575 is disordered. Positions proline 559–serine 575 are enriched in polar residues. The region spanning threonine 581–arginine 657 is the PDZ 3 domain. Serine 598 carries the post-translational modification Phosphoserine. The segment at threonine 664 to methionine 691 is disordered. Serine 702 bears the Phosphoserine mark. In terms of domain architecture, PDZ 4 spans aspartate 729–arginine 811. An interaction with ADGRB1 region spans residues aspartate 729–arginine 811. The segment at lysine 818 to arginine 844 is disordered. Serine 833 and serine 916 each carry phosphoserine. Positions aspartate 852–glutamate 939 constitute a PDZ 5 domain. The segment at aspartate 852–glutamate 939 is interaction with LPAR2 and GRIN2B. A disordered region spans residues glutamate 939–glutamine 966. Polar residues predominate over residues serine 946–alanine 956. A PDZ 6 domain is found at proline 1022 to threonine 1104. Disordered stretches follow at residues aspartate 1109–aspartate 1151 and threonine 1168–leucine 1476. Residues aspartate 1114–valine 1123 show a composition bias toward polar residues. Basic and acidic residues-rich tracts occupy residues serine 1193–glycine 1211 and arginine 1230–glycine 1265. The segment covering serine 1285–glycine 1304 has biased composition (polar residues). 2 stretches are compositionally biased toward basic and acidic residues: residues histidine 1317–lysine 1340 and lysine 1350–glutamate 1361. Phosphoserine is present on serine 1321. Polar residues predominate over residues serine 1363 to alanine 1373. The segment covering alanine 1419–alanine 1437 has biased composition (basic and acidic residues).

It belongs to the MAGUK family. In terms of assembly, interacts with ADRB1, ADGRB1, LPAR2/EDG4, GRIN2B, PTEN, and PTPRB. Interacts with unidentified tyrosine phosphorylated proteins. Interacts with FZD4, FZD7, TGFA and VANGL2. Interacts with DLL1. Interacts with PRRG4 (via cytoplasmic domain). Widely expressed. Colocalizes with TGFA in neurons in the cortex and dentate gyrus, as well as in ependymal cells and some astrocytes (at protein level). Present in lens epithelium.

It localises to the cell membrane. The protein localises to the cell junction. The protein resides in the tight junction. It is found in the nucleus. Its function is as follows. Acts as a scaffolding protein at cell-cell junctions, thereby regulating various cellular and signaling processes. Cooperates with PTEN to modulate the kinase activity of AKT1. Its interaction with PTPRB and tyrosine phosphorylated proteins suggests that it may link receptor tyrosine phosphatase with its substrates at the plasma membrane. In polarized epithelial cells, involved in efficient trafficking of TGFA to the cell surface. Regulates the ability of LPAR2 to activate ERK and RhoA pathways. Regulates the JNK signaling cascade via its interaction with FZD4 and VANGL2. In Mus musculus (Mouse), this protein is Membrane-associated guanylate kinase, WW and PDZ domain-containing protein 3 (Magi3).